We begin with the raw amino-acid sequence, 358 residues long: uncharacterized protein (358 aa).

29–36 (GPINSGKT) contributes to the ATP binding site.

Belongs to the archaeal ATPase family.

This is an uncharacterized protein from Methanocaldococcus jannaschii (strain ATCC 43067 / DSM 2661 / JAL-1 / JCM 10045 / NBRC 100440) (Methanococcus jannaschii).